The primary structure comprises 622 residues: Pyranose 2-oxidase (622 aa).

The first 28 residues, 1–28 (MSASSSDPFHSFAKTSFTSKAAKRATAH), serve as a signal peptide directing secretion. Residues 29–37 (SLPPLPGPG) constitute a propeptide that is removed on maturation. His-167 bears the Tele-8alpha-FAD histidine mark. The substrate site is built by Gln-449 and His-451. His-546 acts as the Proton acceptor in catalysis. Asn-591 is an active-site residue.

It belongs to the GMC oxidoreductase family. As to quaternary structure, homotetramer. FAD serves as cofactor. Post-translationally, not glycosylated.

It localises to the periplasm. The enzyme catalyses D-glucose + O2 = 2-dehydro-D-glucose + H2O2. Catalyzes the oxidation of various aldopyranoses and disaccharides on carbon-2 to the corresponding 2-keto sugars concomitant with the reduction of O(2) to H(2)O(2). Plays an important role in lignin degradation of wood rot fungi by supplying the essential cosubstrate H(2)O(2) for the ligninolytic peroxidases, lignin peroxidase and manganese-dependent peroxidase. The preferred substrate is D-glucose which is converted to 2-dehydro-D-glucose, an intermediate of a secondary metabolic pathway leading to the antibiotic cortalcerone. Also acts on D-xylose, together with D-glucose the major sugars derived from wood, on L-sorbose, D-galactose and 1,5-anhydroglucitol, a diagnostic marker of diabetes mellitus. The sequence is that of Pyranose 2-oxidase (p2ox) from Phlebiopsis gigantea (White-rot fungus).